Consider the following 839-residue polypeptide: Lon protease (839 aa).

One can recognise a Lon N-terminal domain in the interval 31 to 224; it reads LFLIPIKSRP…KVLLFLKKEI (194 aa). 377–384 lines the ATP pocket; that stretch reads GPPGVGKT. Residues 613 to 790 form the Lon proteolytic domain; that stretch reads ASVPGTALGL…EEVALLLFDE (178 aa). Active-site residues include Ser696 and Lys739. The segment at 807-839 is disordered; the sequence is IVNPTRKLSPKKKTTQKQKLSLSKQKGNNQKKK. Residues 823-832 show a composition bias toward low complexity; it reads KQKLSLSKQK.

It belongs to the peptidase S16 family. Homohexamer. Organized in a ring with a central cavity.

Its subcellular location is the cytoplasm. The catalysed reaction is Hydrolysis of proteins in presence of ATP.. Its function is as follows. ATP-dependent serine protease that mediates the selective degradation of mutant and abnormal proteins as well as certain short-lived regulatory proteins. Required for cellular homeostasis and for survival from DNA damage and developmental changes induced by stress. Degrades polypeptides processively to yield small peptide fragments that are 5 to 10 amino acids long. Binds to DNA in a double-stranded, site-specific manner. The sequence is that of Lon protease from Leptospira interrogans serogroup Icterohaemorrhagiae serovar copenhageni (strain Fiocruz L1-130).